The primary structure comprises 199 residues: SCO2-like protein RC0042 (199 aa).

It belongs to the SCO1/2 family.

This chain is SCO2-like protein RC0042, found in Rickettsia conorii (strain ATCC VR-613 / Malish 7).